Reading from the N-terminus, the 150-residue chain is Calmodulin (150 aa).

EF-hand domains follow at residues 9–44 (EQIA…LGQS), 45–80 (PTAA…KMKD), 82–117 (DNEE…LGER), and 118–150 (LSQE…ISSK). Residues Asp-22, Asp-24, Asp-26, Asn-28, Glu-33, Asp-58, Asp-60, Asn-62, Thr-64, Glu-69, Asp-95, Asp-97, Asn-99, Tyr-101, Glu-106, Asp-131, Asp-133, Asp-135, and Glu-142 each coordinate Ca(2+).

The protein belongs to the calmodulin family. Interacts with rng2.

It is found in the cytoplasm. The protein resides in the cytoskeleton. It localises to the microtubule organizing center. Its subcellular location is the spindle pole body. Its function is as follows. Calmodulin mediates the control of a large number of enzymes, ion channels and other proteins by Ca(2+). Among the enzymes to be stimulated by the calmodulin-Ca(2+) complex are a number of protein kinases and phosphatases. This Schizosaccharomyces pombe (strain 972 / ATCC 24843) (Fission yeast) protein is Calmodulin (cam1).